The following is a 285-amino-acid chain: HTH-type transcriptional regulator MurR (285 aa).

In terms of domain architecture, HTH rpiR-type spans 1–77; the sequence is MLYLTKIRNA…MALIGEYSAS (77 aa). The H-T-H motif DNA-binding region spans 37–56; that stretch reads SRKMAKQLGISQSSIVKFAQ. In terms of domain architecture, SIS spans 128-268; it reads IIEVISKAPF…FVGLVQLNDV (141 aa).

In terms of assembly, homotetramer.

It participates in amino-sugar metabolism; N-acetylmuramate degradation [regulation]. In terms of biological role, represses the expression of the murPQ operon involved in the uptake and degradation of N-acetylmuramic acid (MurNAc). Binds to two adjacent inverted repeats within the operator region. MurNAc 6-phosphate, the substrate of MurQ, is the specific inducer that weakens binding of MurR to the operator. This Escherichia coli O7:K1 (strain IAI39 / ExPEC) protein is HTH-type transcriptional regulator MurR.